The primary structure comprises 180 residues: Adenine phosphoribosyltransferase (180 aa).

It belongs to the purine/pyrimidine phosphoribosyltransferase family. As to quaternary structure, homodimer.

The protein localises to the cytoplasm. It catalyses the reaction AMP + diphosphate = 5-phospho-alpha-D-ribose 1-diphosphate + adenine. Its pathway is purine metabolism; AMP biosynthesis via salvage pathway; AMP from adenine: step 1/1. Catalyzes a salvage reaction resulting in the formation of AMP, that is energically less costly than de novo synthesis. The protein is Adenine phosphoribosyltransferase of Actinobacillus succinogenes (strain ATCC 55618 / DSM 22257 / CCUG 43843 / 130Z).